The chain runs to 94 residues: Small ribosomal subunit protein bS20 (94 aa).

Belongs to the bacterial ribosomal protein bS20 family.

Its function is as follows. Binds directly to 16S ribosomal RNA. The protein is Small ribosomal subunit protein bS20 of Acaryochloris marina (strain MBIC 11017).